The chain runs to 318 residues: NADH-ubiquinone oxidoreductase chain 1 (318 aa).

A run of 9 helical transmembrane segments spans residues 2 to 22 (FLTNISCLIIPILLAVAFLTL), 36 to 56 (GPNIVGPYGLLQPIADAIKLF), 69 to 89 (LLFTIAPTLALSLALTLWIPL), 100 to 120 (LGMLFILAMSSLAVYSILWSG), 130 to 152 (IGALRAVAQTISYEVTLAIILLH), 171 to 191 (HIWLIIPSWPLTMMWFISTLA), 217 to 237 (AGPFALFFLAEYANIMMMNAL), 254 to 273 (LYSTNFMLKTTMLTISFLWI), and 294 to 314 (LPLTLALCMWHTSLLISLTSI).

The protein belongs to the complex I subunit 1 family.

It is found in the mitochondrion inner membrane. The catalysed reaction is a ubiquinone + NADH + 5 H(+)(in) = a ubiquinol + NAD(+) + 4 H(+)(out). In terms of biological role, core subunit of the mitochondrial membrane respiratory chain NADH dehydrogenase (Complex I) that is believed to belong to the minimal assembly required for catalysis. Complex I functions in the transfer of electrons from NADH to the respiratory chain. The immediate electron acceptor for the enzyme is believed to be ubiquinone. In Cyclopes didactylus (Silky anteater), this protein is NADH-ubiquinone oxidoreductase chain 1 (MT-ND1).